The chain runs to 170 residues: Protein ripply3 (170 aa).

The WRPW motif motif lies at tryptophan 40–tryptophan 43. Residues glutamate 51–glutamate 61 show a composition bias toward basic and acidic residues. The segment at glutamate 51 to glutamine 78 is disordered. Positions histidine 79 to tyrosine 114 are ripply homology domain. Residues glycine 142–valine 155 are compositionally biased toward polar residues. The tract at residues glycine 142–alanine 170 is disordered.

The protein belongs to the ripply family. As to quaternary structure, interacts with tbx1 and tle4/grg4. At neurula stage, expressed in the region close to the heart mesoderm. At the tailbud stage, expressed in the pharyngeal region.

Its subcellular location is the nucleus. In terms of biological role, acts as a transcriptional corepressor. Negative regulator of the transcriptional activity of tbx1 that plays a key role in pharyngeal development. Plays a role in the formation of the anteroposterior (AP) axis during embryonic development; required to establish the posterolateral border of the pre-placodal ectoderm (PPE) acting downstream of the retinoic acid receptor (RAR) signaling. The polypeptide is Protein ripply3 (ripply3) (Xenopus laevis (African clawed frog)).